We begin with the raw amino-acid sequence, 425 residues long: uncharacterized protein (425 aa).

This is an uncharacterized protein from Salmonella typhimurium (strain LT2 / SGSC1412 / ATCC 700720).